Consider the following 1090-residue polypeptide: Exocyst complex component SEC5B (1090 aa).

The segment covering 1–12 (MSSSDDLDEDEL) has biased composition (acidic residues). A disordered region spans residues 1–126 (MSSSDDLDED…ARKEDDRAWD (126 aa)). Positions 23–46 (RDVTYQKPPSANSRKPVTNLVQQP) are enriched in polar residues. Positions 52–62 (AAAPPSKGGAK) are enriched in low complexity. Over residues 96-109 (GGGGDGGGGRGRGG) the composition is skewed to gly residues. The segment covering 110-126 (SGKERGRARKEDDRAWD) has biased composition (basic and acidic residues). Position 179 is a phosphoserine (Ser-179). Residues 486-502 (VQLSDDTSSMEDNQVQV) are compositionally biased toward polar residues. Disordered regions lie at residues 486–511 (VQLSDDTSSMEDNQVQVDQPLEESAR), 984–1013 (ETVENNPGGHQRKPTRGSEDAISDDKQSSV), and 1055–1090 (PVAKAAYSRTSTDSPSRNYRESQPMGSPVQARPRRR). Positions 999–1010 (RGSEDAISDDKQ) are enriched in basic and acidic residues. Over residues 1062-1071 (SRTSTDSPSR) the composition is skewed to polar residues.

It belongs to the SEC5 family. The exocyst complex is composed of SEC3, SEC5, SEC6, SEC8, SEC10, EXO70A1 and EXO84B.

Its function is as follows. Component of the exocyst complex involved in the docking of exocytic vesicles with fusion sites on the plasma membrane during regulated or polarized secretion. Involved in polarized cell growth and organ morphogenesis. During cytokinesis, involved in cell plate initiation, cell plate maturation and formation of new primary cell wall. This Arabidopsis thaliana (Mouse-ear cress) protein is Exocyst complex component SEC5B (SEC5B).